We begin with the raw amino-acid sequence, 101 residues long: Urease subunit beta (101 aa).

This sequence belongs to the urease beta subunit family. In terms of assembly, heterotrimer of UreA (gamma), UreB (beta) and UreC (alpha) subunits. Three heterotrimers associate to form the active enzyme.

Its subcellular location is the cytoplasm. It carries out the reaction urea + 2 H2O + H(+) = hydrogencarbonate + 2 NH4(+). It functions in the pathway nitrogen metabolism; urea degradation; CO(2) and NH(3) from urea (urease route): step 1/1. In Burkholderia thailandensis (strain ATCC 700388 / DSM 13276 / CCUG 48851 / CIP 106301 / E264), this protein is Urease subunit beta.